Here is a 513-residue protein sequence, read N- to C-terminus: Flavonoid 3'-monooxygenase (513 aa).

The chain crosses the membrane as a helical span at residues 1–21; sequence MATLFLTILLATVLFLILRIF. Topologically, residues 22–513 are cytoplasmic; the sequence is SHRRNRSHNN…APNVYGLGSG (492 aa). Cys-445 contributes to the heme binding site.

It belongs to the cytochrome P450 family. Heme serves as cofactor. As to expression, high expression in siliques and to a lower extent in stems, flowers and senescing leaves.

Its subcellular location is the endoplasmic reticulum membrane. The enzyme catalyses a 3'-unsubstituted flavone + reduced [NADPH--hemoprotein reductase] + O2 = a 3'-hydroxyflavone + oxidized [NADPH--hemoprotein reductase] + H2O + H(+). The protein operates within secondary metabolite biosynthesis; flavonoid biosynthesis. Its function is as follows. Catalyzes the 3'-hydroxylation of the flavonoid B-ring to the 3',4'-hydroxylated state. Convert naringenin to eriodictyol and dihydrokaempferol to dihydroquercetin. The protein is Flavonoid 3'-monooxygenase (CYP75B1) of Arabidopsis thaliana (Mouse-ear cress).